We begin with the raw amino-acid sequence, 304 residues long: MSLFHLIAPSGYCIKQHAALRGIQRLTDAGHQVNNVEVIARRCERFAGTETERLEDLNSLARLTTPNTIVLSVRGGYGASRLLADIDWQALVARQQHDPLLICGHSDFTAIQCGLLAQGNVITFSGPMLVANFGADELNAFTEHHFWLALRNKTFTIEWQGEGPTCQTEGTLWGGNLAMLISLIGTPWMPKIENGILVLEDINEHPFRVERMLLQLYHAGILPRQKAIILGSFSGSTPNDYDAGYNLESVYAFLRSRLSIPLITGLDFGHEQRTVTLPLGAHAILNNTQEGTQLTISGHPVLKM.

Serine 106 acts as the Nucleophile in catalysis. Residues glutamate 200 and histidine 270 each act as charge relay system in the active site.

Belongs to the peptidase S66 family.

The protein localises to the cytoplasm. The enzyme catalyses N-acetyl-D-glucosaminyl-N-acetylmuramoyl-L-alanyl-meso-2,6-diaminoheptanedioyl-D-alanine + H2O = N-acetyl-D-glucosaminyl-N-acetylmuramoyl-L-alanyl-meso-2,6-diaminoheptanedioate + D-alanine. It participates in cell wall biogenesis; peptidoglycan recycling. Releases the terminal D-alanine residue from the cytoplasmic tetrapeptide recycling product L-Ala-gamma-D-Glu-meso-Dap-D-Ala. Can also cleave D-Ala from murein derivatives containing the tetrapeptide, i.e. MurNAc-tetrapeptide, UDP-MurNAc-tetrapeptide, GlcNAc-MurNAc-tetrapeptide, and GlcNAc-anhMurNAc-tetrapeptide. Does not act on murein sacculi or cross-linked muropeptides. The tripeptides produced by the LcdA reaction can then be reused as peptidoglycan building blocks; LcdA is thereby involved in murein recycling. This chain is Murein tetrapeptide carboxypeptidase (ldcA), found in Escherichia coli O6:H1 (strain CFT073 / ATCC 700928 / UPEC).